The primary structure comprises 85 residues: UPF0297 protein CD630_12830 (85 aa).

It belongs to the UPF0297 family.

This chain is UPF0297 protein CD630_12830, found in Clostridioides difficile (strain 630) (Peptoclostridium difficile).